Here is a 1084-residue protein sequence, read N- to C-terminus: TNF receptor-associated factor family protein DDB_G0272098 (1084 aa).

The region spanning 19–103 (YYCPDCGELL…KNRYYETKNF (85 aa)) is the LIM zinc-binding domain. 2 consecutive TRAF-type zinc fingers follow at residues 122–190 (KHIK…IDHE) and 191–248 (IHLS…YNMS). Residues 265–321 (IEEQNQDIKELHNFIENHLSKKFIDLDTIVNIQKYLIKNKNQKISQLTEIIKRVDNS) are a coiled coil. Disordered regions lie at residues 348–392 (YKNS…NINE), 490–523 (IRQQQQQQQQQQQQQQQQQQQPPPTPLPPQNTTI), 537–656 (NNNI…KDGL), and 709–897 (SIVE…NDDD). Composition is skewed to low complexity over residues 349 to 375 (KNSNSNNNNNNKNTNENENTNENTNEN), 492 to 509 (QQQQQQQQQQQQQQQQQQ), 537 to 549 (NNNINENNNNNNK), and 556 to 570 (ITAATATNNSNTTST). The stretch at 489–553 (LIRQQQQQQQ…NNNNNKNNDD (65 aa)) forms a coiled coil. Positions 571–586 (HTILNGTNNEASMTDI) are enriched in polar residues. Residues 587–637 (NETTSTTTTAETTEATASESTEESNNTAETTTTTTTTTTTITTAAETVNST) are compositionally biased toward low complexity. Basic and acidic residues predominate over residues 644 to 656 (TSEKVEEKGKDGL). Residues 735–852 (NGNENENENE…NNNNNNNENV (118 aa)) are a coiled coil. Residues 739–757 (NENENENENENENENENEN) are compositionally biased toward acidic residues. Residues 774–785 (SNINTSNDTEPT) show a composition bias toward polar residues. Residues 790–799 (EDIKKNKENE) are compositionally biased toward basic and acidic residues. The span at 809-849 (NNNIKSVEDTNNNNNNNNNNNNNNNNNNNNNNNNNNNNNNN) shows a compositional bias: low complexity. Composition is skewed to basic and acidic residues over residues 853–864 (YDIKKDRNRENV) and 875–892 (ENGKINDNGDVKMGSEDK). Positions 909–1042 (IFRNQILFKD…DNCFIVNLEV (134 aa)) constitute an MATH domain. Residues 1056–1084 (LLQKSSPPAATTTTTTSSSSSKTTPKTKR) are disordered. Residues 1059-1084 (KSSPPAATTTTTTSSSSSKTTPKTKR) are compositionally biased toward low complexity.

This sequence belongs to the TNF receptor-associated factor family.

The protein resides in the cytoplasm. Functionally, probable adapter protein and signal transducer that links members of the tumor necrosis factor receptor family to different signaling pathways by association with the receptor cytoplasmic domain and kinases. The protein is TNF receptor-associated factor family protein DDB_G0272098 of Dictyostelium discoideum (Social amoeba).